The following is a 279-amino-acid chain: Putative pyruvate, phosphate dikinase regulatory protein (279 aa).

157–164 lines the ADP pocket; sequence GVSRTSKT.

Belongs to the pyruvate, phosphate/water dikinase regulatory protein family. PDRP subfamily.

It catalyses the reaction N(tele)-phospho-L-histidyl/L-threonyl-[pyruvate, phosphate dikinase] + ADP = N(tele)-phospho-L-histidyl/O-phospho-L-threonyl-[pyruvate, phosphate dikinase] + AMP + H(+). The enzyme catalyses N(tele)-phospho-L-histidyl/O-phospho-L-threonyl-[pyruvate, phosphate dikinase] + phosphate + H(+) = N(tele)-phospho-L-histidyl/L-threonyl-[pyruvate, phosphate dikinase] + diphosphate. In terms of biological role, bifunctional serine/threonine kinase and phosphorylase involved in the regulation of the pyruvate, phosphate dikinase (PPDK) by catalyzing its phosphorylation/dephosphorylation. The polypeptide is Putative pyruvate, phosphate dikinase regulatory protein (Lactobacillus helveticus (strain DPC 4571)).